A 272-amino-acid polypeptide reads, in one-letter code: 3-methyl-2-oxobutanoate hydroxymethyltransferase (272 aa).

Mg(2+) contacts are provided by aspartate 43 and aspartate 82. 3-methyl-2-oxobutanoate is bound by residues 43-44 (DS), aspartate 82, and lysine 112. Glutamate 114 is a binding site for Mg(2+). The Proton acceptor role is filled by glutamate 179.

The protein belongs to the PanB family. In terms of assembly, homodecamer; pentamer of dimers. Mg(2+) serves as cofactor.

Its subcellular location is the cytoplasm. The enzyme catalyses 3-methyl-2-oxobutanoate + (6R)-5,10-methylene-5,6,7,8-tetrahydrofolate + H2O = 2-dehydropantoate + (6S)-5,6,7,8-tetrahydrofolate. Its pathway is cofactor biosynthesis; (R)-pantothenate biosynthesis; (R)-pantoate from 3-methyl-2-oxobutanoate: step 1/2. In terms of biological role, catalyzes the reversible reaction in which hydroxymethyl group from 5,10-methylenetetrahydrofolate is transferred onto alpha-ketoisovalerate to form ketopantoate. The chain is 3-methyl-2-oxobutanoate hydroxymethyltransferase from Staphylococcus aureus (strain COL).